Here is a 453-residue protein sequence, read N- to C-terminus: DDB1- and CUL4-associated factor 12 (453 aa).

Over residues 1–12 the composition is skewed to basic residues; it reads MARKVVSRKRKA. A disordered region spans residues 1–34; sequence MARKVVSRKRKAPASPGAGSDAQGPQFGWDHSLH. Positions 1–38 are required for nuclear location and interaction with MOV10; sequence MARKVVSRKRKAPASPGAGSDAQGPQFGWDHSLHKRKR. The residue at position 15 (serine 15) is a Phosphoserine. 6 WD repeats span residues 81–122, 123–175, 176–242, 243–286, 287–331, and 332–366; these read EREF…TSQI, TKIP…TLDP, VCVG…ALKD, IPKE…NTLS, KLLS…SYNV, and KSVCSRERGSGIRSVSFYEHIITVGTGQGSLLFYD.

This sequence belongs to the WD repeat DCAF12 family. In terms of assembly, component of the DCX(DCAF12) E3 ubiquitin ligase complex, at least composed of CUL4 (CUL4A or CUL4B), DDB1, DCAF12 and RBX1. As to expression, highly expressed in lung cancer tissues and some cancer cell lines. Restricted expression in normal testis.

Its subcellular location is the cytoplasm. It is found in the cytoskeleton. The protein localises to the microtubule organizing center. The protein resides in the centrosome. It localises to the nucleus. Its pathway is protein modification; protein ubiquitination. Functionally, substrate-recognition component of a DCX (DDB1-CUL4-X-box) E3 ubiquitin-protein ligase complex of the DesCEND (destruction via C-end degrons) pathway, which recognizes a C-degron located at the extreme C terminus of target proteins, leading to their ubiquitination and degradation. The C-degron recognized by the DesCEND pathway is usually a motif of less than ten residues and can be present in full-length proteins, truncated proteins or proteolytically cleaved forms. The DCX(DCAF12) complex specifically recognizes proteins with a diglutamate (Glu-Glu) at the C-terminus, such as MAGEA3, MAGEA6 and CCT5, leading to their ubiquitination and degradation. Ubiquitination of MAGEA3, MAGEA6 by DCX(DCAF12) complex is required for starvation-induced autophagy. Also directly recognizes the C-terminal glutamate-leucine (Glu-Leu) degron as an alternative degron in proteins such as MOV10, leading to their ubiquitination and degradation. Controls the protein level of MOV10 during spermatogenesis and in T cells, especially after their activation. This is DDB1- and CUL4-associated factor 12 from Homo sapiens (Human).